Consider the following 489-residue polypeptide: L-asparagine permease 1 (489 aa).

Transmembrane regions (helical) follow at residues 25–45, 49–69, 100–120, 137–157, 162–182, 210–230, 255–275, 289–309, 344–364, 369–389, 413–433, and 439–459; these read QLQM…GAGG, KAGP…FLIL, AVGW…TTAI, ILAL…VEWF, FWAA…GTVF, WLPL…VELV, IAIF…YTAY, IGFH…ALSS, YGGI…NAFK, FEIV…TIVL, SPYS…TMAS, and TWTV…WYLV.

It belongs to the amino acid-polyamine-organocation (APC) superfamily. Amino acid transporter (AAT) (TC 2.A.3.1) family.

It is found in the cell membrane. This is L-asparagine permease 1 (ansP1) from Mycobacterium tuberculosis (strain CDC 1551 / Oshkosh).